Here is an 888-residue protein sequence, read N- to C-terminus: MATTTDKQVSPTSPSFVYNLDHEDRNTSLKSGRAVLTDFNEQQFVKFDKGCSIETLLKERTSFIDQLLKKIWEHFFSKDECEQLTLVAVGGYGRGELQPYSDIDLLILGENFIELQPKIVEFITYLWDIGFEVGHAVRNLEDCIEAGREDVTTATNLLEARWLAGNYEQFLSLQNLFNLKSFWPSHEFFQAKLEEQEKRHKRYNDTLYQLEPNIKESPGGLRDIQTILWVAKRHFGASSLQELMQHNFISLQEYKEIQAAYLYLNRIRFALHRLKKRHEDRLLFDHQQQLAELLNHDDRPEHNDSIKAVEAFMKPYYQNAHIVARLNEILLQHFKEEIYHFAEDKIEPINPRFRIINNYLDVVKENLFAKNPTALLEIFIIIENYQHLIQGIRSRTIRLIRNHLHLIDDQFRSDPINKALFIEIFRQPKGVNAAVKRMYAYGILGAYLPSFKKITGLMQFNIFHAYTVDEHTILVIRNLRRFFIKQHAYEFPTAHQIATQLCKPEILLLAGLFHDIAKGRNGAHEKLGAVDAKAFSQKHNLNKNDTDLLSWLVLRHLDFSYVAQKKDLSDPEIIQQFAEKVGTQQRLDYLYLLTLADVRSTSDEVWNDWKNQLFLQLYHNTTQALDSSSSQPRDRVKQAIFNKEKASELLKKRGLIPMHFQGFWQAFEQTDFFNRQSAAEIARITRVLFEEDHEAINIHLQPTTSRGATELIIYMHDRDYLFAQFTQIIDKLDLNIVEAKIYSGEDDMTLVIIYLLNRESTSITDPMILTEIEETLKHQLFLKDDTMPPTQPEPRRIRVFEMPTHIQFQEINEELTELSISTKDIPGLLAKIGQAFKSCKIRVHDAKINTVGEKAEDTFMISSTTNESIHTRHSQEELKQALLNNIEQ.

The tract at residues 1–348 is uridylyltransferase; sequence MATTTDKQVS…YHFAEDKIEP (348 aa). The uridylyl-removing stretch occupies residues 349–709; it reads INPRFRIINN…LQPTTSRGAT (361 aa). An HD domain is found at 468–590; the sequence is VDEHTILVIR…VGTQQRLDYL (123 aa). ACT domains follow at residues 710–787 and 817–888; these read ELII…DDTM and ELSI…NIEQ.

The protein belongs to the GlnD family. It depends on Mg(2+) as a cofactor.

The enzyme catalyses [protein-PII]-L-tyrosine + UTP = [protein-PII]-uridylyl-L-tyrosine + diphosphate. The catalysed reaction is [protein-PII]-uridylyl-L-tyrosine + H2O = [protein-PII]-L-tyrosine + UMP + H(+). Uridylyltransferase (UTase) activity is inhibited by glutamine, while glutamine activates uridylyl-removing (UR) activity. Modifies, by uridylylation and deuridylylation, the PII regulatory proteins (GlnB and homologs), in response to the nitrogen status of the cell that GlnD senses through the glutamine level. Under low glutamine levels, catalyzes the conversion of the PII proteins and UTP to PII-UMP and PPi, while under higher glutamine levels, GlnD hydrolyzes PII-UMP to PII and UMP (deuridylylation). Thus, controls uridylylation state and activity of the PII proteins, and plays an important role in the regulation of nitrogen assimilation and metabolism. The chain is Bifunctional uridylyltransferase/uridylyl-removing enzyme from Hydrogenovibrio crunogenus (strain DSM 25203 / XCL-2) (Thiomicrospira crunogena).